An 88-amino-acid polypeptide reads, in one-letter code: Acylphosphatase (88 aa).

Residues 3 to 88 enclose the Acylphosphatase-like domain; sequence AARFIFTGVV…IPTTEAFVTG (86 aa). Residues Arg-18 and Asn-36 contribute to the active site.

The protein belongs to the acylphosphatase family.

It catalyses the reaction an acyl phosphate + H2O = a carboxylate + phosphate + H(+). The polypeptide is Acylphosphatase (acyP) (Xanthomonas campestris pv. campestris (strain 8004)).